A 545-amino-acid polypeptide reads, in one-letter code: Triacylglycerol lipase ptl1 (545 aa).

The PNPLA domain occupies 182–358 (LYFNGGTAFG…EVCTPKNFIW (177 aa)). Residues 213 to 217 (GCASG) carry the GXSXG motif.

The protein resides in the lipid droplet. It carries out the reaction a triacylglycerol + H2O = a diacylglycerol + a fatty acid + H(+). Functionally, lipid particle-localized triacylglycerol (TAG) lipase. The lipid droplet/particle is a lipid storage compartment which serves as a depot of energy and building blocks for membrane lipid biosynthesis. Involved in the mobilization of the non-polar storage lipids triacylglycerols (TAGs) from lipid particles by hydrolysis of TAGs, releasing and supplying specific fatty acids to the appropriate metabolic pathways. The sequence is that of Triacylglycerol lipase ptl1 (ptl1) from Schizosaccharomyces pombe (strain 972 / ATCC 24843) (Fission yeast).